The sequence spans 313 residues: Protochlorophyllide reductase (313 aa).

It belongs to the short-chain dehydrogenases/reductases (SDR) family. POR subfamily.

It localises to the plastid. The protein resides in the chloroplast. The catalysed reaction is chlorophyllide a + NADP(+) = protochlorophyllide a + NADPH + H(+). It participates in porphyrin-containing compound metabolism; chlorophyll biosynthesis. Phototransformation of protochlorophyllide (Pchlide) to chlorophyllide (Chlide). This is Protochlorophyllide reductase from Avena sativa (Oat).